The primary structure comprises 1574 residues: DNA-directed RNA polymerase subunit beta' (1574 aa).

Positions 64, 66, 79, and 82 each coordinate Zn(2+). Mg(2+) is bound by residues aspartate 590, aspartate 592, and aspartate 594. Residues cysteine 928, cysteine 1002, cysteine 1009, and cysteine 1012 each coordinate Zn(2+).

It belongs to the RNA polymerase beta' chain family. As to quaternary structure, the RNAP catalytic core consists of 2 alpha, 1 beta, 1 beta' and 1 omega subunit. When a sigma factor is associated with the core the holoenzyme is formed, which can initiate transcription. The cofactor is Mg(2+). Zn(2+) is required as a cofactor.

It catalyses the reaction RNA(n) + a ribonucleoside 5'-triphosphate = RNA(n+1) + diphosphate. Functionally, DNA-dependent RNA polymerase catalyzes the transcription of DNA into RNA using the four ribonucleoside triphosphates as substrates. The protein is DNA-directed RNA polymerase subunit beta' of Aquifex aeolicus (strain VF5).